Here is a 108-residue protein sequence, read N- to C-terminus: Cell cycle protein GpsB (108 aa).

Residues leucine 32–alanine 69 are a coiled coil.

This sequence belongs to the GpsB family. As to quaternary structure, forms polymers through the coiled coil domains. Interacts with PBP1, MreC and EzrA.

It localises to the cytoplasm. Divisome component that associates with the complex late in its assembly, after the Z-ring is formed, and is dependent on DivIC and PBP2B for its recruitment to the divisome. Together with EzrA, is a key component of the system that regulates PBP1 localization during cell cycle progression. Its main role could be the removal of PBP1 from the cell pole after pole maturation is completed. Also contributes to the recruitment of PBP1 to the division complex. Not essential for septum formation. This Streptococcus pyogenes serotype M49 (strain NZ131) protein is Cell cycle protein GpsB.